Consider the following 508-residue polypeptide: Flavonoid 3',5'-hydroxylase 2 (508 aa).

Residue Cys443 coordinates heme.

Belongs to the cytochrome P450 family. The cofactor is heme. As to expression, flowers.

Its subcellular location is the microsome. It localises to the endoplasmic reticulum. The catalysed reaction is a 3',5'-unsubstituted flavanone + 2 reduced [NADPH--hemoprotein reductase] + 2 O2 = a 3',5'-dihydroxyflavanone + 2 oxidized [NADPH--hemoprotein reductase] + 2 H2O + 2 H(+). It functions in the pathway pigment biosynthesis; anthocyanin biosynthesis. Its function is as follows. Catalyzes the 3'5'-hydroxylation of naringenin and eriodictyol to form 5,7,3,'4',5'-pentahydroxyflavanone and 3',5'-hydroxylation of dihydrokaempferol and dihydroquercetin to form dihydromyricetin. This chain is Flavonoid 3',5'-hydroxylase 2 (CYP75A3), found in Petunia hybrida (Petunia).